The primary structure comprises 144 residues: Snake venom vascular endothelial growth factor toxin cratrin (144 aa).

Positions 1–24 (MAVYLLAVAILFCIQGWPSGTVQG) are cleaved as a signal peptide. Position 25 is a pyrrolidone carboxylic acid (glutamine 25). 3 cysteine pairs are disulfide-bonded: cysteine 38–cysteine 80, cysteine 69–cysteine 115, and cysteine 73–cysteine 117. The disordered stretch occupies residues 119–144 (PRSTVNNGKRKKNPKEGEPRAKFPLV). Positions 132 to 144 (PKEGEPRAKFPLV) are enriched in basic and acidic residues.

Belongs to the PDGF/VEGF growth factor family. Snake venom VEGF subfamily. Homodimer; disulfide-linked. Interacts with VEGF receptor-1 (FLT1) with a high affinity, whereas it binds to VEGF receptor-2 (KDR) with a low affinity. Does not bind VEGF receptor-3 (FLT4). As to expression, expressed by the venom gland.

Its subcellular location is the secreted. Its function is as follows. Snake venom VEGFs that may contribute to venom dispersion and prey subjugation by inducing vascular permeability and hypotension. This protein induces an increase in capillary permeability after intradermal injection, as well as a drastic hypotensive effect after intravenous injection. The hypotension is mediated by nitric oxide (NO), which is produced by VEGF-activated endothelium NO synthase. Also induces angiogenesis in vitro. Like other crotalid VEGFs, this protein interacts with VEGF receptor-1 (FLT1) with a high affinity, whereas it binds to VEGF receptor-2 (KDR) with a low affinity. The sequence is that of Snake venom vascular endothelial growth factor toxin cratrin from Crotalus atrox (Western diamondback rattlesnake).